The chain runs to 642 residues: Chaperone protein HtpG (642 aa).

An a; substrate-binding region spans residues 1–348 (MSTKIEQLEF…AQDLSLNVSR (348 aa)). The b stretch occupies residues 349 to 564 (EILQQDRQIR…AFSMSPALER (216 aa)). The c stretch occupies residues 565 to 642 (MYRASGQPVP…MLANRLARTV (78 aa)).

It belongs to the heat shock protein 90 family. Homodimer.

It localises to the cytoplasm. Functionally, molecular chaperone. Has ATPase activity. The polypeptide is Chaperone protein HtpG (Rhodococcus jostii (strain RHA1)).